A 73-amino-acid polypeptide reads, in one-letter code: Large ribosomal subunit protein bL31 (73 aa).

It belongs to the bacterial ribosomal protein bL31 family. Type A subfamily. As to quaternary structure, part of the 50S ribosomal subunit.

Its function is as follows. Binds the 23S rRNA. The polypeptide is Large ribosomal subunit protein bL31 (rpmE) (Roseobacter denitrificans (strain ATCC 33942 / OCh 114) (Erythrobacter sp. (strain OCh 114))).